A 391-amino-acid chain; its full sequence is tRNA-specific 2-thiouridylase MnmA (391 aa).

ATP contacts are provided by residues 9–16 (GMSGGVDS) and methionine 35. Positions 95–97 (NPD) are interaction with target base in tRNA. The Nucleophile role is filled by cysteine 100. An intrachain disulfide couples cysteine 100 to cysteine 196. Glycine 124 provides a ligand contact to ATP. The segment at 146–148 (KDQ) is interaction with tRNA. Catalysis depends on cysteine 196, which acts as the Cysteine persulfide intermediate. The segment at 308-309 (RY) is interaction with tRNA.

This sequence belongs to the MnmA/TRMU family.

The protein localises to the cytoplasm. The enzyme catalyses S-sulfanyl-L-cysteinyl-[protein] + uridine(34) in tRNA + AH2 + ATP = 2-thiouridine(34) in tRNA + L-cysteinyl-[protein] + A + AMP + diphosphate + H(+). Its function is as follows. Catalyzes the 2-thiolation of uridine at the wobble position (U34) of tRNA, leading to the formation of s(2)U34. This chain is tRNA-specific 2-thiouridylase MnmA, found in Burkholderia orbicola (strain MC0-3).